A 900-amino-acid polypeptide reads, in one-letter code: Alanine--tRNA ligase (900 aa).

Positions 587, 591, 691, and 695 each coordinate Zn(2+).

The protein belongs to the class-II aminoacyl-tRNA synthetase family. Requires Zn(2+) as cofactor.

It localises to the cytoplasm. The catalysed reaction is tRNA(Ala) + L-alanine + ATP = L-alanyl-tRNA(Ala) + AMP + diphosphate. Catalyzes the attachment of alanine to tRNA(Ala) in a two-step reaction: alanine is first activated by ATP to form Ala-AMP and then transferred to the acceptor end of tRNA(Ala). Also edits incorrectly charged Ser-tRNA(Ala) and Gly-tRNA(Ala) via its editing domain. This is Alanine--tRNA ligase from Aeropyrum pernix (strain ATCC 700893 / DSM 11879 / JCM 9820 / NBRC 100138 / K1).